The primary structure comprises 320 residues: Aristolochene synthase (320 aa).

The span at 1–14 shows a compositional bias: polar residues; the sequence is MKKPNGTNGASSSL. Residues 1–20 form a disordered region; it reads MKKPNGTNGASSSLEPPPST. The Mg(2+) site is built by D90, N219, S223, and E227. (2E,6E)-farnesyl diphosphate contacts are provided by R314 and Y315.

It belongs to the terpene synthase family. Homodimer. Mg(2+) is required as a cofactor.

The enzyme catalyses (2E,6E)-farnesyl diphosphate = (+)-aristolochene + diphosphate. The protein operates within sesquiterpene biosynthesis; aristolochene biosynthesis; aristolochene from farnesyl diphosphate: step 1/1. In terms of biological role, catalyzes the cyclization of trans,trans-farnesyl diphosphate (FPP) to the bicyclic sesquiterpene aristolochene. Produces germacrene A as an enzyme-bound intermediate that is not released by the enzyme, but is further cyclized to produce aristolochene. Aristolochene is the likely parent compound for a number of sesquiterpenoid toxins produced by filamentous fungi. This chain is Aristolochene synthase (Ari1), found in Aspergillus terreus.